We begin with the raw amino-acid sequence, 527 residues long: Homeobox protein NOBOX (527 aa).

4 disordered regions span residues 1–126 (MEPT…DLKK), 194–245 (VEKL…DVFP), 271–306 (VTPP…RDVP), and 488–527 (ETGS…GAKE). A DNA-binding region (homeobox) is located at residues 136 to 195 (RKKTRTLYRSDQLEELERIFQEDHYPDSDKRHEISQMVGVTPQRIMVWFQNRRAKWRKVE). Residues 194 to 203 (VEKLNEKETK) are compositionally biased toward basic and acidic residues. Over residues 488-506 (ETGSSLSKMSDEQTSSSLE) the composition is skewed to polar residues. Residues 511-527 (EEVRDKNKNSHAAGAKE) show a composition bias toward basic and acidic residues.

In terms of tissue distribution, specifically expressed in ovaries and testes. In ovaries, expressed in oocytes from primordial through antral follicles but not in granulosa cells, theca cells and corpora lutea.

The protein localises to the nucleus. Functionally, transcription factor which plays an essential role in postnatal follicle development. Binds preferentially to the DNA sequences 5'-TAATTG-3', 5'-TAGTTG-3' and 5'-TAATTA-3'. Directly regulates the transcription of POU5F1 and GDF9 during early folliculogenesis. This Mus musculus (Mouse) protein is Homeobox protein NOBOX (Nobox).